The sequence spans 711 residues: Choline transporter-like protein 2 (711 aa).

Residues 1–33 (MGDERPHYYGKHGTPQKYDPTFKGPIYNRGCTD) lie on the Cytoplasmic side of the membrane. Thr-14 is modified (phosphothreonine). Residues 34 to 54 (VICCVFLLVAIVGYVAVGIIA) traverse the membrane as a helical segment. Topologically, residues 55 to 232 (WTHGDPRKVI…RIFEDYTVSW (178 aa)) are extracellular. Residues Asn-187 and Asn-200 are each glycosylated (N-linked (GlcNAc...) asparagine). The chain crosses the membrane as a helical span at residues 233–253 (YWIIIGLVIAMAMSLLFIILL). At 254–256 (RFL) the chain is on the cytoplasmic side. Residues 257 to 277 (AGIMVWVMIIMVILVLGYGIF) form a helical membrane-spanning segment. Residues 278-315 (HCYMEYSRLRGEAGSDVSLVDLGFQTDFRVYLHLRQTW) are Extracellular-facing. Residues 316–336 (LAFMIILSILEVIIILLLIFL) traverse the membrane as a helical segment. The Cytoplasmic segment spans residues 337 to 364 (RKRILIAIALIKEASRAVGYVMCTMLYP). Residues 365–385 (LVTFFLLCLCIAYWASTAVFL) form a helical membrane-spanning segment. Over 386-440 (STSNEAVYKIFDDGLCPFTAKTCNPETFPSSNESRQCPNARCQFAFYGGESGYHR) the chain is Extracellular. The N-linked (GlcNAc...) asparagine glycan is linked to Asn-417. The chain crosses the membrane as a helical span at residues 441–461 (ALLGLQIFNAFMFFWLANFVL). The Cytoplasmic portion of the chain corresponds to 462–504 (ALGQVTLAGAFASYYWALRKPDDLPAFPLFSAFGRALRYHTGS). A helical transmembrane segment spans residues 505 to 525 (LAFGALILAIVQIIRVILEYL). Residues 526–563 (DQRLKAAENKFAKCLMTCLKCCFWCLEKFIKFLNRNAY) are Extracellular-facing. Residues 564–584 (IMIAIYGTNFCTSARNAFFLL) form a helical membrane-spanning segment. Residues 585-599 (MRNIIRVAVLDKVTD) are Cytoplasmic-facing. A helical transmembrane segment spans residues 600–620 (FLFLLGKLLIVGSVGILAFFF). Residues 621–638 (FTHRIRIVQDTAPPLNYY) are Extracellular-facing. Residues 639–659 (WVPILTVIVGSYLIAHGFFSV) form a helical membrane-spanning segment. Topologically, residues 660–711 (YGMCVDTLFLCFCEDLERNDGSQERPYFMSPELRDILLKGSAEEGKRAEAEE) are cytoplasmic.

The protein belongs to the CTL (choline transporter-like) family. Interacts with COCH. In terms of processing, N-glycosylated.

The protein resides in the cell membrane. It localises to the mitochondrion outer membrane. The enzyme catalyses choline(out) + n H(+)(in) = choline(in) + n H(+)(out). It catalyses the reaction ethanolamine(out) + n H(+)(in) = ethanolamine(in) + n H(+)(out). In terms of biological role, choline/H+ antiporter, mainly in mitochodria. Also acts as a low-affinity ethanolamine/H+ antiporter, regulating the supply of extracellular ethanolamine (Etn) for the CDP-Etn pathway, redistribute intracellular Etn and balance the CDP-Cho and CDP-Etn arms of the Kennedy pathway. In Pongo abelii (Sumatran orangutan), this protein is Choline transporter-like protein 2 (SLC44A2).